Consider the following 639-residue polypeptide: Protein P1 (639 aa).

A signal peptide spans 1-20 (MNRFTAYAALFFIFSLCSTA). 3 consecutive transmembrane segments (helical) span residues 121–141 (AASVTLWAIISIWFGLYWTLA), 144–164 (ITLFLWTFSIEALCLILLGCI), and 172–192 (ALSLSEHLPVFLFMSPLKIIW). In terms of domain architecture, Peptidase S39 spans 207–399 (VEGYKGFSVP…GITSPNYVFE (193 aa)). Residues histidine 255, aspartate 286, and serine 354 each act as for protease activity in the active site. Disordered regions lie at residues 456–510 (TNAP…AAIS) and 542–639 (VSQK…NSKA). Residues 463–487 (TAQTNSAEKTAPSTSAEKTAPTNKP) show a composition bias toward polar residues. Residues 551–561 (KQNKRGRRGGK) are compositionally biased toward basic residues. The span at 562–576 (NKQNNLPPTSTQSIS) shows a compositional bias: polar residues.

Belongs to the peptidase S39B family. Post-translationally, specific enzymatic cleavages in vivo yield mature proteins. The protease probably cleaves itself and releases the VPg protein. The VPg protein is probably further cleaved in its C-terminus.

The protein localises to the membrane. Precursor from which the VPg molecule is probably released at the onset of the RNA synthesis. Essential for virus replication. In Solanum tuberosum (Potato), this protein is Protein P1.